The sequence spans 551 residues: GMP synthase [glutamine-hydrolyzing] (551 aa).

Positions 1-28 (MTSSPTAAARTEGEAAPTVPTQVESGTA) are disordered. The span at 19–28 (VPTQVESGTA) shows a compositional bias: polar residues. The Glutamine amidotransferase type-1 domain occupies 37–227 (MVAILDFGSQ…VYHICGCEPE (191 aa)). Residue cysteine 114 is the Nucleophile of the active site. Residues histidine 201 and glutamate 203 contribute to the active site. Residues 228–426 (WTTAAFIEEA…LGLPEEIVQR (199 aa)) form the GMPS ATP-PPase domain. Residue 255-261 (SGGVDSS) coordinates ATP.

As to quaternary structure, homodimer.

It carries out the reaction XMP + L-glutamine + ATP + H2O = GMP + L-glutamate + AMP + diphosphate + 2 H(+). It functions in the pathway purine metabolism; GMP biosynthesis; GMP from XMP (L-Gln route): step 1/1. Functionally, catalyzes the synthesis of GMP from XMP. This Gloeobacter violaceus (strain ATCC 29082 / PCC 7421) protein is GMP synthase [glutamine-hydrolyzing].